The chain runs to 147 residues: Hemoglobin subunit delta (147 aa).

Positions 3 to 147 (HLTADEKAAV…VAAALAHKYH (145 aa)) constitute a Globin domain. Positions 64 and 93 each coordinate heme b.

The protein belongs to the globin family. As to quaternary structure, heterotetramer of two delta chains and two alpha chains. Red blood cells.

This Carlito syrichta (Philippine tarsier) protein is Hemoglobin subunit delta (HBD).